The primary structure comprises 427 residues: Enolase (427 aa).

Glutamine 163 is a (2R)-2-phosphoglycerate binding site. Residue glutamate 205 is the Proton donor of the active site. Mg(2+) is bound by residues aspartate 242, glutamate 285, and aspartate 312. 4 residues coordinate (2R)-2-phosphoglycerate: lysine 337, arginine 366, serine 367, and lysine 388. Lysine 337 acts as the Proton acceptor in catalysis.

The protein belongs to the enolase family. It depends on Mg(2+) as a cofactor.

Its subcellular location is the cytoplasm. It is found in the secreted. The protein resides in the cell surface. The enzyme catalyses (2R)-2-phosphoglycerate = phosphoenolpyruvate + H2O. The protein operates within carbohydrate degradation; glycolysis; pyruvate from D-glyceraldehyde 3-phosphate: step 4/5. Catalyzes the reversible conversion of 2-phosphoglycerate (2-PG) into phosphoenolpyruvate (PEP). It is essential for the degradation of carbohydrates via glycolysis. This Ralstonia nicotianae (strain ATCC BAA-1114 / GMI1000) (Ralstonia solanacearum) protein is Enolase.